The following is a 397-amino-acid chain: MALLRGVFIVAAKRTPFGAYGGLLKDFSATDLTEFAARAALSAGKVPPETIDSVIVGNVMQSSSDAAYLARHVGLRVGVPTETGALTLNRLCGSGFQSIVSGCQEICSKDAEVVLCGGTESMSQSPYCVRNVRFGTKFGLDLKLEDTLWAGLTDQHVKLPMGMTAENLAAKYNISREDCDRYALQSQQRWKAANEAGYFNEEMAPIEVKTKKGKQTMQVDEHARPQTTLEQLQKLPSVFKKDGTVTAGNASGVSDGAGAVIIASEDAVKKHNFTPLARVVGYFVSGCDPTIMGIGPVPAINGALKKAGLSLKDMDLIDVNEAFAPQFLSVQKALDLDPSKTNVSGGAIALGHPLGGSGSRITAHLVHELRRRGGKYAVGSACIGGGQGIALIIQNTA.

Residues 1-16 constitute a mitochondrion; not cleaved transit peptide; it reads MALLRGVFIVAAKRTP. At Lys-25 the chain carries N6-acetyllysine; alternate. At Lys-25 the chain carries N6-succinyllysine; alternate. Ser-28 is modified (phosphoserine). Lys-45 bears the N6-succinyllysine mark. Catalysis depends on Cys-92, which acts as the Acyl-thioester intermediate. At Thr-119 the chain carries Phosphothreonine. Ser-121 is modified (phosphoserine). Phosphotyrosine is present on Tyr-127. Phosphothreonine is present on Thr-136. Lys-137, Lys-143, Lys-158, Lys-171, Lys-191, and Lys-209 each carry N6-acetyllysine; alternate. N6-succinyllysine; alternate occurs at positions 137, 143, 158, 171, 191, and 209. Lys-211, Lys-212, and Lys-214 each carry N6-succinyllysine. CoA is bound by residues Arg-224 and Thr-227. Lys-234 bears the N6-acetyllysine; alternate mark. N6-succinyllysine; alternate is present on Lys-234. Position 240 is an N6-succinyllysine (Lys-240). Lys-241 is modified (N6-acetyllysine). CoA is bound at residue Ser-251. N6-acetyllysine is present on residues Lys-269 and Lys-270. Lys-305 is modified (N6-acetyllysine; alternate). The residue at position 305 (Lys-305) is an N6-succinyllysine; alternate. Position 310 is a phosphoserine (Ser-310). N6-acetyllysine; alternate is present on Lys-312. The residue at position 312 (Lys-312) is an N6-succinyllysine; alternate. Lys-340 carries the post-translational modification N6-acetyllysine. Phosphoserine is present on Ser-344. Lys-375 is modified (N6-acetyllysine). The Proton donor/acceptor role is filled by Cys-382.

This sequence belongs to the thiolase-like superfamily. Thiolase family. As to quaternary structure, homotetramer. Interacts with BNIP3.

Its subcellular location is the mitochondrion. It carries out the reaction an acyl-CoA + acetyl-CoA = a 3-oxoacyl-CoA + CoA. The enzyme catalyses 2 acetyl-CoA = acetoacetyl-CoA + CoA. The catalysed reaction is acetyl-CoA + H2O = acetate + CoA + H(+). It catalyses the reaction propanoyl-CoA + H2O = propanoate + CoA + H(+). It carries out the reaction butanoyl-CoA + H2O = butanoate + CoA + H(+). The enzyme catalyses hexanoyl-CoA + H2O = hexanoate + CoA + H(+). The catalysed reaction is octanoyl-CoA + H2O = octanoate + CoA + H(+). It catalyses the reaction decanoyl-CoA + H2O = decanoate + CoA + H(+). It carries out the reaction dodecanoyl-CoA + H2O = dodecanoate + CoA + H(+). The enzyme catalyses tetradecanoyl-CoA + H2O = tetradecanoate + CoA + H(+). The catalysed reaction is hexadecanoyl-CoA + H2O = hexadecanoate + CoA + H(+). The protein operates within lipid metabolism; fatty acid beta-oxidation. In terms of biological role, in the production of energy from fats, this is one of the enzymes that catalyzes the last step of the mitochondrial beta-oxidation pathway, an aerobic process breaking down fatty acids into acetyl-CoA. Using free coenzyme A/CoA, catalyzes the thiolytic cleavage of medium- to long-chain unbranched 3-oxoacyl-CoAs into acetyl-CoA and a fatty acyl-CoA shortened by two carbon atoms. Also catalyzes the condensation of two acetyl-CoA molecules into acetoacetyl-CoA and could be involved in the production of ketone bodies. Also displays hydrolase activity on various fatty acyl-CoAs. Thereby, could be responsible for the production of acetate in a side reaction to beta-oxidation. Abolishes BNIP3-mediated apoptosis and mitochondrial damage. This is 3-ketoacyl-CoA thiolase, mitochondrial (Acaa2) from Mus musculus (Mouse).